A 57-amino-acid polypeptide reads, in one-letter code: MAETRVRKNESIDAALRRFKRSLSKEGTLAEVRKRKHFEKPSVKRKKKSEAARKRKF.

Positions 32 to 57 (VRKRKHFEKPSVKRKKKSEAARKRKF) are disordered. Residues 33 to 57 (RKRKHFEKPSVKRKKKSEAARKRKF) are compositionally biased toward basic residues.

This sequence belongs to the bacterial ribosomal protein bS21 family.

This is Small ribosomal subunit protein bS21 from Shouchella clausii (strain KSM-K16) (Alkalihalobacillus clausii).